We begin with the raw amino-acid sequence, 392 residues long: MYIHHLALRDFRNYRRQDVALSPTTILLYGPNAAGKTSLLEAIFYLATTRSPRLSSDRDLVRWDAVGEAGAPPFARIAADVERRIGPVRLEILVQRRLDDGGQPLNGAQKLVRIDKRPARAIDLIGQLRVVLFTPTDVMLVDGPPAERRRYLDITLSQLDPHYVRTLAYYQKILLQRNSLLRAWREQRRLPRNVDAELGYWDQELAAAGGYLLAERLRAVVELSALAGSIYRKISGGEHELQIEYIASCDLDAARDAGSLAERLRLAFAAQRTDELARGQTLCGPHRDDLVFNVAGVNLGRYGSRGQQRTIALALKIGEAELMQQRGGDAPVLLLDDVLSELDNRRRMHLLDLILRPQQQTLLTATNLSDFSADFLAAARRFRVEDGQLFAG.

30–37 (GPNAAGKT) contacts ATP.

This sequence belongs to the RecF family.

It is found in the cytoplasm. Functionally, the RecF protein is involved in DNA metabolism; it is required for DNA replication and normal SOS inducibility. RecF binds preferentially to single-stranded, linear DNA. It also seems to bind ATP. The protein is DNA replication and repair protein RecF of Chloroflexus aggregans (strain MD-66 / DSM 9485).